The following is a 315-amino-acid chain: Homoserine kinase (315 aa).

P96–A106 is an ATP binding site.

It belongs to the GHMP kinase family. Homoserine kinase subfamily.

It localises to the cytoplasm. It carries out the reaction L-homoserine + ATP = O-phospho-L-homoserine + ADP + H(+). It functions in the pathway amino-acid biosynthesis; L-threonine biosynthesis; L-threonine from L-aspartate: step 4/5. Its function is as follows. Catalyzes the ATP-dependent phosphorylation of L-homoserine to L-homoserine phosphate. This is Homoserine kinase from Mycolicibacterium paratuberculosis (strain ATCC BAA-968 / K-10) (Mycobacterium paratuberculosis).